Here is a 476-residue protein sequence, read N- to C-terminus: Cytochrome P450 monooxygenase ppzE (476 aa).

Position 452 (cysteine 452) interacts with heme.

It belongs to the cytochrome P450 family. Heme is required as a cofactor.

It functions in the pathway secondary metabolite biosynthesis. In terms of biological role, cytochrome P450 monooxygenase; part of the gene cluster that mediates the biosynthesis of pyrrolopyrazines, secondary metabolites showing insecticidal activity. The role of ppzE within the pathway has still to be determined. The single multifunctional NRPS ppzA is sufficient to produce peramine via condensation of 1-pyrroline-5-carboxylate and arginine, N-methylation of the alpha-amino group of arginine and reduction of the thioester and the cyclization to form an iminium ion resulting in release from the peptide synthetase. Deprotonation of this intermediate and oxidation of the pyrroline ring would give rise to peramine. In Epichloe species that produce only peramine, the peramine synthetase gene is not localized in a gene cluster, in contrast to Metarhizium species that contain additional pyrrolopyrazine biosynthesis genes. The 2-oxoglutarate-Fe(II) type oxidoreductase ppzC hydroxylates peramine to yield the newly identified compound 8-hydroxyperamine whereas ppzD converts L-proline into trans-4-hydroxy-L-proline, a precursor of peramine biosynthesis. This chain is Cytochrome P450 monooxygenase ppzE, found in Metarhizium majus (strain ARSEF 297).